The primary structure comprises 512 residues: Calcium-dependent protein kinase 18 (512 aa).

Positions 1–25 (MGLCSSSSARRDAGTPGGGNGAGNK) are disordered. Glycine 2 is lipidated: N-myristoyl glycine. The 261-residue stretch at 52-312 (YALGKLLGHG…AAQALSHEWV (261 aa)) folds into the Protein kinase domain. ATP is bound by residues 58–66 (LGHGQFGYT) and lysine 81. Aspartate 178 functions as the Proton acceptor in the catalytic mechanism. The tract at residues 318–348 (ASDIPLDISVLHNMRQFVKYSRFKQFALRAL) is autoinhibitory domain. 4 consecutive EF-hand domains span residues 355 to 390 (EELS…DVPW), 392 to 427 (LKGP…VHQL), 434 to 469 (KWKS…KGSI), and 472 to 499 (LLEE…ASMS). Residues aspartate 368, aspartate 370, asparagine 372, threonine 374, glutamate 379, aspartate 405, asparagine 407, aspartate 409, glutamate 416, aspartate 447, aspartate 449, aspartate 451, tyrosine 453, glutamate 458, aspartate 477, aspartate 479, aspartate 481, lysine 483, and glutamate 488 each contribute to the Ca(2+) site.

It belongs to the protein kinase superfamily. Ser/Thr protein kinase family. CDPK subfamily. As to quaternary structure, interacts with MPK5. In terms of processing, autophosphorylated. Phosphorylated by MPK5.

The protein localises to the cell membrane. It catalyses the reaction L-seryl-[protein] + ATP = O-phospho-L-seryl-[protein] + ADP + H(+). The catalysed reaction is L-threonyl-[protein] + ATP = O-phospho-L-threonyl-[protein] + ADP + H(+). Its activity is regulated as follows. Activated by calcium. Autophosphorylation may play an important role in the regulation of the kinase activity. Functionally, may play a role in signal transduction pathways that involve calcium as a second messenger. Functions upstream of MPK5 in a signaling pathway that represses defense gene expression and negatively regulates resistance to rice blast fungus. Phosphorylates MPK5 at Thr-14 and Thr-32 and activates MPK5 independently of MAP kinase kinase (MKK) phosphorylation. May be involved in arbuscular mycorrhizal presymbiotic phase signaling. Phosphorylates the elicitor-responsive protein ERG1 in vitro. Phosphorylation is calcium-dependent. This Oryza sativa subsp. japonica (Rice) protein is Calcium-dependent protein kinase 18.